Consider the following 183-residue polypeptide: Small ribosomal subunit protein uS4c (183 aa).

The S4 RNA-binding domain occupies 82 to 143; it reads MRLDNILFRL…KQRSKALIQN (62 aa).

Belongs to the universal ribosomal protein uS4 family. As to quaternary structure, part of the 30S ribosomal subunit. Contacts protein S5. The interaction surface between S4 and S5 is involved in control of translational fidelity.

It is found in the plastid. Its subcellular location is the chloroplast. One of the primary rRNA binding proteins, it binds directly to 16S rRNA where it nucleates assembly of the body of the 30S subunit. Its function is as follows. With S5 and S12 plays an important role in translational accuracy. The polypeptide is Small ribosomal subunit protein uS4c (rps4) (Babiana stricta (Baboon flower)).